The following is a 506-amino-acid chain: Probable cytosol aminopeptidase (506 aa).

Mn(2+)-binding residues include Lys278 and Asp283. Lys290 is an active-site residue. Asp301, Asp360, and Glu362 together coordinate Mn(2+). Arg364 is a catalytic residue.

It belongs to the peptidase M17 family. Mn(2+) serves as cofactor.

It is found in the cytoplasm. The catalysed reaction is Release of an N-terminal amino acid, Xaa-|-Yaa-, in which Xaa is preferably Leu, but may be other amino acids including Pro although not Arg or Lys, and Yaa may be Pro. Amino acid amides and methyl esters are also readily hydrolyzed, but rates on arylamides are exceedingly low.. It carries out the reaction Release of an N-terminal amino acid, preferentially leucine, but not glutamic or aspartic acids.. Presumably involved in the processing and regular turnover of intracellular proteins. Catalyzes the removal of unsubstituted N-terminal amino acids from various peptides. In Ralstonia nicotianae (strain ATCC BAA-1114 / GMI1000) (Ralstonia solanacearum), this protein is Probable cytosol aminopeptidase.